The sequence spans 478 residues: Adenosylhomocysteinase (478 aa).

Thr57, Asp139, and Glu201 together coordinate substrate. 202–204 (TTT) contributes to the NAD(+) binding site. Substrate-binding residues include Lys231 and Asp235. Residues Asn236, 265–270 (GYGDVG), Glu288, Asn323, 344–346 (IGH), and Asn392 contribute to the NAD(+) site.

It belongs to the adenosylhomocysteinase family. NAD(+) is required as a cofactor.

Its subcellular location is the cytoplasm. It catalyses the reaction S-adenosyl-L-homocysteine + H2O = L-homocysteine + adenosine. Its pathway is amino-acid biosynthesis; L-homocysteine biosynthesis; L-homocysteine from S-adenosyl-L-homocysteine: step 1/1. May play a key role in the regulation of the intracellular concentration of adenosylhomocysteine. The sequence is that of Adenosylhomocysteinase from Corynebacterium glutamicum (strain R).